The following is a 102-amino-acid chain: MMKKRQMVIKQRSRNSNTSSSWTTTSSSSSSSEISNVRYVECQKNHAANIGGYAVDGCREFMAAGVEGTVDALRCAACGCHRNFHRKEVDTEVVCEYSPPNA.

Residues 1-13 are compositionally biased toward basic residues; it reads MMKKRQMVIKQRS. Positions 1–34 are disordered; that stretch reads MMKKRQMVIKQRSRNSNTSSSWTTTSSSSSSSEI. Residues 14–32 show a composition bias toward low complexity; that stretch reads RNSNTSSSWTTTSSSSSSS. The segment at 39-88 adopts a ZF-HD dimerization-type; degenerate zinc-finger fold; the sequence is YVECQKNHAANIGGYAVDGCREFMAAGVEGTVDALRCAACGCHRNFHRKE.

Homo- and heterodimers. Interacts with ZHD1, ZHD5, ZHD6, ZHD7, ZHD8, ZHD10 and ZHD13. Mostly expressed in roots and stems, present in siliques and seedlings, and weakly observed in petioles, leaves and flowers.

It localises to the cytoplasm. Functionally, inhibits zinc finger homeodomain (ZHD) transcription factors, such as ZHD5, by interacting with them to prevent both their nuclear localization and their DNA-binding properties. Involved in integrating signals from multiple hormones by preventing the expression of genes involved in gibberellic acid (GA), auxin and brassinosteroid signaling and by promoting the expression of abscisic acid (ABA)-responsive genes. Regulates several development aspects, including photomorphogenesis, apical dominance, longevity, flower morphology and fertility, as well as root and stem elongation. Promotes the formation of ectopic shoot meristems on leaf margins. The protein is Mini zinc finger protein 1 (MIF1) of Arabidopsis thaliana (Mouse-ear cress).